A 341-amino-acid chain; its full sequence is S-adenosylmethionine:tRNA ribosyltransferase-isomerase (341 aa).

Belongs to the QueA family. In terms of assembly, monomer.

It is found in the cytoplasm. It catalyses the reaction 7-aminomethyl-7-carbaguanosine(34) in tRNA + S-adenosyl-L-methionine = epoxyqueuosine(34) in tRNA + adenine + L-methionine + 2 H(+). Its pathway is tRNA modification; tRNA-queuosine biosynthesis. Functionally, transfers and isomerizes the ribose moiety from AdoMet to the 7-aminomethyl group of 7-deazaguanine (preQ1-tRNA) to give epoxyqueuosine (oQ-tRNA). This chain is S-adenosylmethionine:tRNA ribosyltransferase-isomerase, found in Clostridium botulinum (strain Okra / Type B1).